Reading from the N-terminus, the 105-residue chain is ESAT-6-like protein EsxU (105 aa).

This sequence belongs to the WXG100 family. CFP-10 subfamily. As to quaternary structure, forms a tight 1:1 complex with EsxT. Complex formation results in induction of alpha-helical conformation and stability against chemical denaturation.

It localises to the secreted. This is ESAT-6-like protein EsxU from Mycobacterium tuberculosis (strain ATCC 25618 / H37Rv).